The chain runs to 103 residues: Co-chaperonin GroES (103 aa).

The protein belongs to the GroES chaperonin family. As to quaternary structure, heptamer of 7 subunits arranged in a ring. Interacts with the chaperonin GroEL.

The protein resides in the cytoplasm. In terms of biological role, together with the chaperonin GroEL, plays an essential role in assisting protein folding. The GroEL-GroES system forms a nano-cage that allows encapsulation of the non-native substrate proteins and provides a physical environment optimized to promote and accelerate protein folding. GroES binds to the apical surface of the GroEL ring, thereby capping the opening of the GroEL channel. This chain is Co-chaperonin GroES, found in Synechococcus sp. (strain WH7803).